We begin with the raw amino-acid sequence, 264 residues long: S-adenosylmethionine decarboxylase proenzyme (264 aa).

The Schiff-base intermediate with substrate; via pyruvic acid role is filled by Ser-112. A Pyruvic acid (Ser); by autocatalysis modification is found at Ser-112. Catalysis depends on His-117, which acts as the Proton acceptor; for processing activity. The active-site Proton donor; for catalytic activity is Cys-140.

This sequence belongs to the prokaryotic AdoMetDC family. Type 2 subfamily. Heterooctamer of four alpha and four beta chains arranged as a tetramer of alpha/beta heterodimers. The cofactor is pyruvate. In terms of processing, is synthesized initially as an inactive proenzyme. Formation of the active enzyme involves a self-maturation process in which the active site pyruvoyl group is generated from an internal serine residue via an autocatalytic post-translational modification. Two non-identical subunits are generated from the proenzyme in this reaction, and the pyruvate is formed at the N-terminus of the alpha chain, which is derived from the carboxyl end of the proenzyme. The post-translation cleavage follows an unusual pathway, termed non-hydrolytic serinolysis, in which the side chain hydroxyl group of the serine supplies its oxygen atom to form the C-terminus of the beta chain, while the remainder of the serine residue undergoes an oxidative deamination to produce ammonia and the pyruvoyl group blocking the N-terminus of the alpha chain.

It catalyses the reaction S-adenosyl-L-methionine + H(+) = S-adenosyl 3-(methylsulfanyl)propylamine + CO2. It participates in amine and polyamine biosynthesis; S-adenosylmethioninamine biosynthesis; S-adenosylmethioninamine from S-adenosyl-L-methionine: step 1/1. Its function is as follows. Catalyzes the decarboxylation of S-adenosylmethionine to S-adenosylmethioninamine (dcAdoMet), the propylamine donor required for the synthesis of the polyamines spermine and spermidine from the diamine putrescine. This Cronobacter sakazakii (strain ATCC BAA-894) (Enterobacter sakazakii) protein is S-adenosylmethionine decarboxylase proenzyme.